Here is a 533-residue protein sequence, read N- to C-terminus: CTP synthase (533 aa).

The amidoligase domain stretch occupies residues methionine 1–leucine 264. Serine 12 lines the CTP pocket. Residue serine 12 coordinates UTP. ATP is bound by residues serine 13 to isoleucine 18 and aspartate 70. Aspartate 70 and glutamate 138 together coordinate Mg(2+). CTP-binding positions include aspartate 145–glutamate 147, lysine 185–glutamine 190, and lysine 221. UTP contacts are provided by residues lysine 185–glutamine 190 and lysine 221. Residue lysine 237–alanine 239 coordinates ATP. The 245-residue stretch at threonine 289–lysine 533 folds into the Glutamine amidotransferase type-1 domain. L-glutamine is bound at residue glycine 357. The active-site Nucleophile; for glutamine hydrolysis is the cysteine 384. Residues leucine 385 to glutamine 388, glutamate 407, and arginine 464 contribute to the L-glutamine site. Residues histidine 509 and glutamate 511 contribute to the active site.

Belongs to the CTP synthase family. As to quaternary structure, homotetramer.

It catalyses the reaction UTP + L-glutamine + ATP + H2O = CTP + L-glutamate + ADP + phosphate + 2 H(+). The enzyme catalyses L-glutamine + H2O = L-glutamate + NH4(+). The catalysed reaction is UTP + NH4(+) + ATP = CTP + ADP + phosphate + 2 H(+). It functions in the pathway pyrimidine metabolism; CTP biosynthesis via de novo pathway; CTP from UDP: step 2/2. Allosterically activated by GTP, when glutamine is the substrate; GTP has no effect on the reaction when ammonia is the substrate. The allosteric effector GTP functions by stabilizing the protein conformation that binds the tetrahedral intermediate(s) formed during glutamine hydrolysis. Inhibited by the product CTP, via allosteric rather than competitive inhibition. In terms of biological role, catalyzes the ATP-dependent amination of UTP to CTP with either L-glutamine or ammonia as the source of nitrogen. Regulates intracellular CTP levels through interactions with the four ribonucleotide triphosphates. This Methanococcus maripaludis (strain DSM 14266 / JCM 13030 / NBRC 101832 / S2 / LL) protein is CTP synthase.